A 23-amino-acid chain; its full sequence is Protein YqfH (23 aa).

The chain is Protein YqfH from Escherichia coli (strain K12).